Here is an 872-residue protein sequence, read N- to C-terminus: Coatomer subunit gamma-2 (872 aa).

HEAT repeat units follow at residues 64 to 101, 283 to 320, 321 to 355, 356 to 392, 395 to 430, and 467 to 504; these read MEAT…ISED, RELA…KHPS, AVTA…GSES, SVDR…KYPR, SVMM…ENPD, and PTPS…QNEP.

This sequence belongs to the COPG family. As to quaternary structure, oligomeric complex.

The protein localises to the cytoplasm. It localises to the golgi apparatus membrane. It is found in the cytoplasmic vesicle. Its subcellular location is the COPI-coated vesicle membrane. Its function is as follows. The coatomer is a cytosolic protein complex that binds to dilysine motifs and reversibly associates with Golgi non-clathrin-coated vesicles, which further mediate biosynthetic protein transport from the ER, via the Golgi up to the trans Golgi network. Coatomer complex is required for budding from Golgi membranes, and is essential for the retrograde Golgi-to-ER transport of dilysine-tagged proteins. In Xenopus tropicalis (Western clawed frog), this protein is Coatomer subunit gamma-2 (copg2).